A 342-amino-acid polypeptide reads, in one-letter code: Delta(6)-protoilludene synthase 8 (342 aa).

Position 81 (aspartate 81) interacts with Mg(2+). Positions 93-97 (RDMVD) match the DDXXD motif motif. Mg(2+) contacts are provided by asparagine 217, serine 221, and glutamate 225. The short motif at 217–225 (NDLVSYNRE) is the NSE/DTE motif element. (2E,6E)-farnesyl diphosphate-binding residues include arginine 305 and tyrosine 306.

This sequence belongs to the terpene synthase family. Mg(2+) is required as a cofactor.

It catalyses the reaction (2E,6E)-farnesyl diphosphate = Delta(6)-protoilludene + diphosphate. In terms of biological role, terpene cyclase that catalyzes the cyclization of farnesyl diphosphate (FPP) to delta(6)-protoilludene. This is Delta(6)-protoilludene synthase 8 from Postia placenta (strain ATCC 44394 / Madison 698-R) (Brown rot fungus).